The following is a 938-amino-acid chain: Isoleucine--tRNA ligase (938 aa).

A 'HIGH' region motif is present at residues 58 to 68; sequence PYANGHLHMGH. Residue E566 participates in L-isoleucyl-5'-AMP binding. A 'KMSKS' region motif is present at residues 607–611; it reads KMSKS. K610 is an ATP binding site. Positions 906, 909, 926, and 929 each coordinate Zn(2+).

This sequence belongs to the class-I aminoacyl-tRNA synthetase family. IleS type 1 subfamily. In terms of assembly, monomer. Zn(2+) serves as cofactor.

The protein resides in the cytoplasm. The enzyme catalyses tRNA(Ile) + L-isoleucine + ATP = L-isoleucyl-tRNA(Ile) + AMP + diphosphate. In terms of biological role, catalyzes the attachment of isoleucine to tRNA(Ile). As IleRS can inadvertently accommodate and process structurally similar amino acids such as valine, to avoid such errors it has two additional distinct tRNA(Ile)-dependent editing activities. One activity is designated as 'pretransfer' editing and involves the hydrolysis of activated Val-AMP. The other activity is designated 'posttransfer' editing and involves deacylation of mischarged Val-tRNA(Ile). The polypeptide is Isoleucine--tRNA ligase (Desulfovibrio desulfuricans (strain ATCC 27774 / DSM 6949 / MB)).